Here is a 453-residue protein sequence, read N- to C-terminus: Secreted triacylglycerol lipase LIP2 (453 aa).

The signal sequence occupies residues 1–19 (MKLSLVVLTLISVAAQALA). The N-linked (GlcNAc...) asparagine glycan is linked to Asn98. Cys115 and Cys284 form a disulfide bridge. Ser197 (nucleophile) is an active-site residue. N-linked (GlcNAc...) asparagine glycosylation is present at Asn230. Residues Asp344 and His378 contribute to the active site. Cys360 and Cys406 are joined by a disulfide.

This sequence belongs to the AB hydrolase superfamily. Lipase family. Class Lip subfamily.

It is found in the secreted. It carries out the reaction a triacylglycerol + H2O = a diacylglycerol + a fatty acid + H(+). The catalysed reaction is a monoacylglycerol + H2O = glycerol + a fatty acid + H(+). It catalyses the reaction a diacylglycerol + H2O = a monoacylglycerol + a fatty acid + H(+). Its activity is regulated as follows. The activity is significantly increased in the presence of Triton X-100 and partially inhibited by PMSF but unaffected by univalent and divalent metal ions. Activity is significantly decreased in acetate buffer compared to that in citrate buffer at the same pH. Its function is as follows. Major secreted lipase involved in Dandruff and seborrheic dermatitis (D/SD) probably via lipase-mediated breakdown of sebaceous lipids and release of irritating free fatty acids. Has triacylglycerol lipase activity and is able to hydrolyze triolein, tristearin, trilinolein, tripalmitoylglycerol and trihexadecenoin. Hydrolyze diacylglycerols such as distearin, dilinolein, dipalmitoylglycerol and dipalmitolein. Shows high esterase activity against 4-nitrophenyl palmitate and 1-naphthyl palmitate but not 1-naphthyl acetate, suggesting that it specifically recognizes fatty acids. Mostly converts monoolein to di- and triolein, while free fatty acids are only produced in low amounts. The chain is Secreted triacylglycerol lipase LIP2 from Malassezia globosa (strain ATCC MYA-4612 / CBS 7966) (Dandruff-associated fungus).